Here is a 366-residue protein sequence, read N- to C-terminus: MSDRNTSNSLTLKERMLSAGAGSVLTSLILTPMDVVRIRLQQQQMIPDCSCDGAAEVPNAVSSGSKMKTFTNVGGQNLNNAKIFWESACFQELHCKNSSLKFNGTLEAFTKIASVEGITSLWRGISLTLLMAIPANMVYFSGYEYIRDVSPIASTYPTLNPLFCGAIARVFAATSIAPLELVKTKLQSIPRSSKSTKTWMMVKDLLNETRQEMKMVGPSRALFKGLEITLWRDVPFSAIYWSSYELCKERLWLDSTRFASKDANWVHFINSFASGCISGMIAAICTHPFDVGKTRWQISMMNNSDPKGGNRSRNMFKFLETIWRTEGLAALYTGLAARVIKIRPSCAIMISSYEISKKVFGNKLHQ.

Solcar repeat units lie at residues 14 to 149 (ERML…IRDV), 156 to 250 (YPTL…CKER), and 266 to 359 (VHFI…SKKV). 6 helical membrane passes run 17 to 36 (LSAG…MDVV), 126 to 146 (SLTL…YEYI), 162 to 182 (LFCG…LELV), 229 to 249 (TLWR…LCKE), 268 to 286 (FINS…AICT), and 331 to 352 (LYTG…MISS).

This sequence belongs to the mitochondrial carrier (TC 2.A.29) family.

It is found in the mitochondrion inner membrane. In terms of biological role, involved in the mitochondrial activation of SOD2 by specifically facilitating insertion of the essential manganese cofactor. Has the ability to activate iron regulon in an iron-dependent manner. Responds to calorie restriction (CR) strength. In Saccharomyces cerevisiae (strain ATCC 204508 / S288c) (Baker's yeast), this protein is Mitochondrial carrier protein MTM1 (MTM1).